Reading from the N-terminus, the 122-residue chain is Small ribosomal subunit protein uS13 (122 aa).

Positions 93-122 (RLSLPVRGQRTKTNSRTRKGKRKTVAGKKK) are disordered. Basic residues predominate over residues 101 to 122 (QRTKTNSRTRKGKRKTVAGKKK).

It belongs to the universal ribosomal protein uS13 family. Part of the 30S ribosomal subunit. Forms a loose heterodimer with protein S19. Forms two bridges to the 50S subunit in the 70S ribosome.

Its function is as follows. Located at the top of the head of the 30S subunit, it contacts several helices of the 16S rRNA. In the 70S ribosome it contacts the 23S rRNA (bridge B1a) and protein L5 of the 50S subunit (bridge B1b), connecting the 2 subunits; these bridges are implicated in subunit movement. Contacts the tRNAs in the A and P-sites. This chain is Small ribosomal subunit protein uS13, found in Chlamydia abortus (strain DSM 27085 / S26/3) (Chlamydophila abortus).